A 429-amino-acid chain; its full sequence is 3-phosphoshikimate 1-carboxyvinyltransferase (429 aa).

Positions 23, 24, and 28 each coordinate 3-phosphoshikimate. K23 contacts phosphoenolpyruvate. Phosphoenolpyruvate is bound by residues G95 and R123. Positions 168, 170, 316, and 343 each coordinate 3-phosphoshikimate. A phosphoenolpyruvate-binding site is contributed by Q170. D316 functions as the Proton acceptor in the catalytic mechanism. Residues R347 and R389 each coordinate phosphoenolpyruvate.

This sequence belongs to the EPSP synthase family. As to quaternary structure, monomer.

The protein localises to the cytoplasm. It carries out the reaction 3-phosphoshikimate + phosphoenolpyruvate = 5-O-(1-carboxyvinyl)-3-phosphoshikimate + phosphate. It functions in the pathway metabolic intermediate biosynthesis; chorismate biosynthesis; chorismate from D-erythrose 4-phosphate and phosphoenolpyruvate: step 6/7. In terms of biological role, catalyzes the transfer of the enolpyruvyl moiety of phosphoenolpyruvate (PEP) to the 5-hydroxyl of shikimate-3-phosphate (S3P) to produce enolpyruvyl shikimate-3-phosphate and inorganic phosphate. In Bacillus anthracis (strain A0248), this protein is 3-phosphoshikimate 1-carboxyvinyltransferase.